Reading from the N-terminus, the 159-residue chain is SsrA-binding protein (159 aa).

Over residues 131–148 (YDKRQTLREKQDRREAER) the composition is skewed to basic and acidic residues. Residues 131–159 (YDKRQTLREKQDRREAERTISAIKRKQRA) are disordered.

It belongs to the SmpB family.

It is found in the cytoplasm. Required for rescue of stalled ribosomes mediated by trans-translation. Binds to transfer-messenger RNA (tmRNA), required for stable association of tmRNA with ribosomes. tmRNA and SmpB together mimic tRNA shape, replacing the anticodon stem-loop with SmpB. tmRNA is encoded by the ssrA gene; the 2 termini fold to resemble tRNA(Ala) and it encodes a 'tag peptide', a short internal open reading frame. During trans-translation Ala-aminoacylated tmRNA acts like a tRNA, entering the A-site of stalled ribosomes, displacing the stalled mRNA. The ribosome then switches to translate the ORF on the tmRNA; the nascent peptide is terminated with the 'tag peptide' encoded by the tmRNA and targeted for degradation. The ribosome is freed to recommence translation, which seems to be the essential function of trans-translation. The sequence is that of SsrA-binding protein from Streptomyces coelicolor (strain ATCC BAA-471 / A3(2) / M145).